Consider the following 227-residue polypeptide: [D-Ala2]-deltorphins (227 aa).

Residues 1–20 (MSFLKKSLLLVLFLGLVSHS) form the signal peptide. The propeptide occupies 21–46 (VCKEEKRETEEENENEEENHEVGSEM). Residues 22–227 (CKEEKRETEE…DVVGGEAKKM (206 aa)) form a disordered region. The segment covering 30–39 (EEENENEEEN) has biased composition (acidic residues). Ala-50 carries the D-alanine (Ala) modification. A propeptide spanning residues 57–75 (DTEEKNENEEENQEEGSEM) is cleaved from the precursor. A compositionally biased stretch (acidic residues) spans 62-72 (NENEEENQEEG). The segment covering 73 to 87 (SEMKRYAFGYPKREP) has biased composition (basic and acidic residues). Ala-79 carries the D-alanine (Ala) modification. The propeptide occupies 86–104 (EPEEENENEEENHEEGSEM). The segment covering 88-98 (EEENENEEENH) has biased composition (acidic residues). Basic and acidic residues predominate over residues 99-108 (EEGSEMKRYA). Ala-108 carries the D-alanine (Ala) modification. Gly-113 carries the glycine amide modification. Positions 115–140 (EAKKMKREPEEENENEEENHEEGSEM) are excised as a propeptide. Residues 124 to 134 (EEENENEEENH) show a composition bias toward acidic residues. The segment covering 135 to 144 (EEGSEMKRYA) has biased composition (basic and acidic residues). D-alanine (Ala) is present on Ala-144. Gly-149 carries the post-translational modification Glycine amide. Residues 151-176 (EAKKMKREPEEENENEEENHEEGSEM) constitute a propeptide that is removed on maturation. Residues 160–170 (EEENENEEENH) are compositionally biased toward acidic residues. Positions 171–180 (EEGSEMKRYA) are enriched in basic and acidic residues. The residue at position 180 (Ala-180) is a D-alanine (Ala). Gly-185 is subject to Glycine amide. Positions 187 to 212 (EAKKMKREPEEENENEEENHEEGSEM) are excised as a propeptide. The segment covering 196-206 (EEENENEEENH) has biased composition (acidic residues). Over residues 207–216 (EEGSEMKRYA) the composition is skewed to basic and acidic residues. Ala-216 carries the post-translational modification D-alanine (Ala). At Gly-221 the chain carries Glycine amide. A propeptide spanning residues 223–227 (EAKKM) is cleaved from the precursor.

This sequence belongs to the frog skin active peptide (FSAP) family. Dermorphin subfamily. As to expression, expressed by the skin glands.

The protein resides in the secreted. Functionally, deltorphin is a heptapeptide with a very potent opiate-like activity. Has high affinity and selectivity for delta-type opioid receptors. The two dermorphin-like peptides have a similar affinity and selectivity for the mu opioid receptor as dermorphin. The polypeptide is [D-Ala2]-deltorphins (Phyllomedusa bicolor (Two-colored leaf frog)).